A 974-amino-acid chain; its full sequence is Bifunctional glutamine synthetase adenylyltransferase/adenylyl-removing enzyme (974 aa).

The interval Met-1–Gln-464 is adenylyl removase. Residues Leu-468–Tyr-974 are adenylyl transferase.

This sequence belongs to the GlnE family. The cofactor is Mg(2+).

It catalyses the reaction [glutamine synthetase]-O(4)-(5'-adenylyl)-L-tyrosine + phosphate = [glutamine synthetase]-L-tyrosine + ADP. The enzyme catalyses [glutamine synthetase]-L-tyrosine + ATP = [glutamine synthetase]-O(4)-(5'-adenylyl)-L-tyrosine + diphosphate. Involved in the regulation of glutamine synthetase GlnA, a key enzyme in the process to assimilate ammonia. When cellular nitrogen levels are high, the C-terminal adenylyl transferase (AT) inactivates GlnA by covalent transfer of an adenylyl group from ATP to specific tyrosine residue of GlnA, thus reducing its activity. Conversely, when nitrogen levels are low, the N-terminal adenylyl removase (AR) activates GlnA by removing the adenylyl group by phosphorolysis, increasing its activity. The regulatory region of GlnE binds the signal transduction protein PII (GlnB) which indicates the nitrogen status of the cell. The polypeptide is Bifunctional glutamine synthetase adenylyltransferase/adenylyl-removing enzyme (Bartonella henselae (strain ATCC 49882 / DSM 28221 / CCUG 30454 / Houston 1) (Rochalimaea henselae)).